A 194-amino-acid chain; its full sequence is Orotate phosphoribosyltransferase (194 aa).

5-phospho-alpha-D-ribose 1-diphosphate contacts are provided by residues Arg102, Lys103, Lys106, His108, and 129–137 (EDVVTTGGS). Residues Thr133 and Arg161 each coordinate orotate.

It belongs to the purine/pyrimidine phosphoribosyltransferase family. PyrE subfamily. In terms of assembly, homodimer. Requires Mg(2+) as cofactor.

It catalyses the reaction orotidine 5'-phosphate + diphosphate = orotate + 5-phospho-alpha-D-ribose 1-diphosphate. The protein operates within pyrimidine metabolism; UMP biosynthesis via de novo pathway; UMP from orotate: step 1/2. Its function is as follows. Catalyzes the transfer of a ribosyl phosphate group from 5-phosphoribose 1-diphosphate to orotate, leading to the formation of orotidine monophosphate (OMP). The chain is Orotate phosphoribosyltransferase from Prochlorococcus marinus (strain MIT 9211).